Consider the following 370-residue polypeptide: tRNA-specific 2-thiouridylase MnmA (370 aa).

ATP is bound by residues 19 to 26 and Leu-45; that span reads AMSGGVDS. Catalysis depends on Cys-113, which acts as the Nucleophile. A disulfide bridge links Cys-113 with Cys-209. An ATP-binding site is contributed by Gly-137. The segment at 159–161 is interaction with tRNA; the sequence is RDQ. Cys-209 functions as the Cysteine persulfide intermediate in the catalytic mechanism.

It belongs to the MnmA/TRMU family.

The protein localises to the cytoplasm. It catalyses the reaction S-sulfanyl-L-cysteinyl-[protein] + uridine(34) in tRNA + AH2 + ATP = 2-thiouridine(34) in tRNA + L-cysteinyl-[protein] + A + AMP + diphosphate + H(+). Functionally, catalyzes the 2-thiolation of uridine at the wobble position (U34) of tRNA, leading to the formation of s(2)U34. This Zymomonas mobilis subsp. mobilis (strain ATCC 31821 / ZM4 / CP4) protein is tRNA-specific 2-thiouridylase MnmA.